The primary structure comprises 158 residues: Dysbindin domain-containing protein 1 (158 aa).

Disordered regions lie at residues 1–50 and 93–158; these read MEPP…VPAP and ADSD…PQED. Phosphoserine occurs at positions 95 and 119. Over residues 125-141 the composition is skewed to basic and acidic residues; that stretch reads TRAEQSHEKQPLGDPER.

Belongs to the dysbindin family.

This Homo sapiens (Human) protein is Dysbindin domain-containing protein 1 (DBNDD1).